Reading from the N-terminus, the 601-residue chain is Nuclear envelope protein ndc1 (601 aa).

Topologically, residues 1–34 are cytoplasmic; sequence MVMLRTSFPSGSRTKAVRYHTLLRPILQQRFLRA. Residues 35 to 55 traverse the membrane as a helical segment; that stretch reads CFALLCLCCITSYWFSSGPFI. Over 56–58 the chain is Perinuclear space; sequence SLS. A helical membrane pass occupies residues 59-79; sequence FWFLSLVRGFVCFFFMFPYFV. Topologically, residues 80–106 are cytoplasmic; sequence MLKSRMSTQKVTKQSLGAQLFYDFSPK. The chain crosses the membrane as a helical span at residues 107–127; the sequence is SFFLVYLTFAVSVSCLCLFYI. Residues 128–153 lie on the Perinuclear space side of the membrane; it reads KGHASSIRLQWIASPNAYELPSLNER. Residues 154–174 traverse the membrane as a helical segment; that stretch reads FVYMTYFSHILILALTVEHLY. The Cytoplasmic segment spans residues 175 to 182; the sequence is LQRDSPSR. A helical membrane pass occupies residues 183–203; sequence PVINVSFFNYIFQNLGWLIRF. Residues 204–256 lie on the Perinuclear space side of the membrane; that stretch reads SFRKSIICCLFTPFSYAILRSYIWRFAALLTSCCRRIAYTKTPPKWPLSLRLL. A helical membrane pass occupies residues 257–277; it reads LHSFWMAFIVCLTFQIALLIF. Residues 278 to 601 lie on the Cytoplasmic side of the membrane; sequence RVFLYSGPMI…VLFREYKSNS (324 aa).

It belongs to the NDC1 family. As to quaternary structure, component of the nuclear pore complex (NPC). NPC constitutes the exclusive means of nucleocytoplasmic transport. NPCs allow the passive diffusion of ions and small molecules and the active, nuclear transport receptor-mediated bidirectional transport of macromolecules such as proteins, RNAs, ribonucleoparticles (RNPs), and ribosomal subunits across the nuclear envelope. Due to its 8-fold rotational symmetry, all subunits are present with 8 copies or multiples thereof.

Its subcellular location is the nucleus. The protein localises to the nuclear pore complex. It localises to the nucleus membrane. The protein resides in the cytoplasm. It is found in the cytoskeleton. Its subcellular location is the microtubule organizing center. The protein localises to the spindle pole body. Its function is as follows. Component of the nuclear pore complex (NPC) and the spindle pole body (SPB), which plays a key role in de novo assembly and insertion of both structures in the nuclear envelope. Involved in the formation of the bipolar mitotic spindle. Anchors the spindle pole body in the nuclear envelope. The polypeptide is Nuclear envelope protein ndc1 (cut11) (Schizosaccharomyces pombe (strain 972 / ATCC 24843) (Fission yeast)).